The following is a 404-amino-acid chain: Formate-dependent phosphoribosylglycinamide formyltransferase (404 aa).

N(1)-(5-phospho-beta-D-ribosyl)glycinamide contacts are provided by residues 25–26 (EL) and Glu85. ATP-binding positions include Arg118, Lys159, 164–169 (SSGKGQ), 199–202 (EGFI), and Glu207. An ATP-grasp domain is found at 123–318 (RLAAEELGLP…EFELHARAIL (196 aa)). The Mg(2+) site is built by Glu277 and Glu289. Residues Asp296, Lys365, and 372-373 (RR) each bind N(1)-(5-phospho-beta-D-ribosyl)glycinamide.

The protein belongs to the PurK/PurT family. In terms of assembly, homodimer.

It catalyses the reaction N(1)-(5-phospho-beta-D-ribosyl)glycinamide + formate + ATP = N(2)-formyl-N(1)-(5-phospho-beta-D-ribosyl)glycinamide + ADP + phosphate + H(+). It functions in the pathway purine metabolism; IMP biosynthesis via de novo pathway; N(2)-formyl-N(1)-(5-phospho-D-ribosyl)glycinamide from N(1)-(5-phospho-D-ribosyl)glycinamide (formate route): step 1/1. In terms of biological role, involved in the de novo purine biosynthesis. Catalyzes the transfer of formate to 5-phospho-ribosyl-glycinamide (GAR), producing 5-phospho-ribosyl-N-formylglycinamide (FGAR). Formate is provided by PurU via hydrolysis of 10-formyl-tetrahydrofolate. This Burkholderia pseudomallei (strain 1106a) protein is Formate-dependent phosphoribosylglycinamide formyltransferase.